The chain runs to 176 residues: Disulfide bond formation protein B (176 aa).

Over 1-14 (MLRFLNQCSQGRGA) the chain is Cytoplasmic. Residues 15–31 (WLLMAFTALALELTALW) form a helical membrane-spanning segment. At 32–49 (FQHVMLLKPCVLCIYERC) the chain is on the periplasmic side. An intrachain disulfide couples Cys41 to Cys44. The helical transmembrane segment at 50–65 (ALFGVLGAALIGAIAP) threads the bilayer. The Cytoplasmic segment spans residues 66–71 (KTPLRY). The chain crosses the membrane as a helical span at residues 72-89 (VAMVIWLYSAFRGVQLTY). Topologically, residues 90-144 (EHTMLQLYPSPFATCDFMVRFPEWLPLDKWVPQVFVASGDCAERQWDFLGLEMPQ) are periplasmic. Cysteines 104 and 130 form a disulfide. A helical transmembrane segment spans residues 145–163 (WLLGIFIAYLIVAVLVMIS). Over 164–176 (QPFKAKKRDLFGR) the chain is Cytoplasmic.

The protein belongs to the DsbB family.

The protein localises to the cell inner membrane. Its function is as follows. Required for disulfide bond formation in some periplasmic proteins. Acts by oxidizing the DsbA protein. This Shigella sonnei (strain Ss046) protein is Disulfide bond formation protein B.